The sequence spans 458 residues: Argininosuccinate lyase (458 aa).

Belongs to the lyase 1 family. Argininosuccinate lyase subfamily.

Its subcellular location is the cytoplasm. The catalysed reaction is 2-(N(omega)-L-arginino)succinate = fumarate + L-arginine. The protein operates within amino-acid biosynthesis; L-arginine biosynthesis; L-arginine from L-ornithine and carbamoyl phosphate: step 3/3. The chain is Argininosuccinate lyase from Salmonella paratyphi B (strain ATCC BAA-1250 / SPB7).